The chain runs to 284 residues: Pheromone-regulated membrane protein 4 (284 aa).

The helical transmembrane segment at 20 to 38 (IISLTLVLLGVFSFLLLTW) threads the bilayer. Positions 157–272 (RTDFLDIIRT…PLLKSEARGN (116 aa)) constitute a Glutaredoxin domain.

It is found in the membrane. The polypeptide is Pheromone-regulated membrane protein 4 (PRM4) (Saccharomyces cerevisiae (strain ATCC 204508 / S288c) (Baker's yeast)).